The primary structure comprises 95 residues: Small ribosomal subunit protein bS6 (95 aa).

Belongs to the bacterial ribosomal protein bS6 family.

Binds together with bS18 to 16S ribosomal RNA. In Desulforamulus reducens (strain ATCC BAA-1160 / DSM 100696 / MI-1) (Desulfotomaculum reducens), this protein is Small ribosomal subunit protein bS6.